The chain runs to 196 residues: Adenine phosphoribosyltransferase (196 aa).

The protein belongs to the purine/pyrimidine phosphoribosyltransferase family. As to quaternary structure, homodimer.

It is found in the cytoplasm. The catalysed reaction is AMP + diphosphate = 5-phospho-alpha-D-ribose 1-diphosphate + adenine. It functions in the pathway purine metabolism; AMP biosynthesis via salvage pathway; AMP from adenine: step 1/1. Its function is as follows. Catalyzes a salvage reaction resulting in the formation of AMP, that is energically less costly than de novo synthesis. The protein is Adenine phosphoribosyltransferase of Methylibium petroleiphilum (strain ATCC BAA-1232 / LMG 22953 / PM1).